A 353-amino-acid chain; its full sequence is 2-oxoglutarate-Fe(II) type oxidoreductase ppzD (353 aa).

A Fe2OG dioxygenase domain is found at 181 to 292; that stretch reads NTSELRLNHY…RYSVAYFGKP (112 aa). Fe cation-binding residues include His-208, Asp-210, and His-268. Arg-283 lines the 2-oxoglutarate pocket.

This sequence belongs to the iron/ascorbate-dependent oxidoreductase family. Fe(2+) is required as a cofactor.

The enzyme catalyses L-proline + 2-oxoglutarate + O2 = trans-4-hydroxy-L-proline + succinate + CO2. The catalysed reaction is L-proline + 2-oxoglutarate + O2 = trans-3-hydroxy-L-proline + succinate + CO2. It carries out the reaction D-proline + 2-oxoglutarate + O2 = cis-4-hydroxy-D-proline + succinate + CO2. It participates in secondary metabolite biosynthesis. 2-oxoglutarate-Fe(II) type oxidoreductase; part of the gene cluster that mediates the biosynthesis of pyrrolopyrazines, secondary metabolites showing insecticidal activity. Within the pathway, ppzD converts L-proline into trans-4-hydroxy-L-proline as a major product, yielding a key precursor for peramine biosynthesis. PpzD is also able to convert L-proline into trans-3-hydroxy-L-proline. The single multifunctional NRPS ppzA is sufficient to produce peramine via condensation of 1-pyrroline-5-carboxylate and arginine, N-methylation of the alpha-amino group of arginine and reduction of the thioester and the cyclization to form an iminium ion resulting in release from the peptide synthetase. Deprotonation of this intermediate and oxidation of the pyrroline ring would give rise to peramine. In Epichloe species that produce only peramine, the peramine synthetase gene is not localized in a gene cluster, in contrast to Metarhizium species that contain additional pyrrolopyrazine biosynthesis genes. The 2-oxoglutarate-Fe(II) type oxidoreductase ppzC hydroxylates peramine to yield the newly identified compound 8-hydroxyperamine whereas ppzD converts L-proline into trans-4-hydroxy-L-proline, a precursor of peramine biosynthesis. The chain is 2-oxoglutarate-Fe(II) type oxidoreductase ppzD from Metarhizium rileyi (strain RCEF 4871) (Nomuraea rileyi).